Reading from the N-terminus, the 424-residue chain is MTDRCLASINAALTDSDPAIAGLIDQERQRQETHLELIASENFTSQAVMQAQGSVLTNKYAEGLPHKRYYGGCEHVDAIEELAIERARRLFGAAWANVQPHSGAQANFAVFLALLQPGDTIMGMDLSHGGHLTHGSPVNVSGKWFKVVHYGVEPDSQQLDMEAVRQLALKERPQLIICGYSAYPRTIDFAAFRSIADEVGAYLLADMAHIAGLVAAGVHPSPIAHCDVVTTTTHKTLRGPRGGLILCRDADFGRKFDKAVFPGSQGGPLEHVIAAKAVALGEALQPEFHAYSCQVVANAQVLAGRIQERGIAVVSGGTDNHLVLLDLRSIGMTGKVADLLVSDVNITANKNTVPFDPESPFVTSGLRLGTAALTTRGFDEEAFREVADVIADRLLKPQDESIKAQCLERVRQLCGRFPLYRGSL.

(6S)-5,6,7,8-tetrahydrofolate is bound by residues Leu126 and Gly130–Leu132. Lys235 is subject to N6-(pyridoxal phosphate)lysine. Ser359–Phe361 provides a ligand contact to (6S)-5,6,7,8-tetrahydrofolate.

It belongs to the SHMT family. As to quaternary structure, homodimer. Requires pyridoxal 5'-phosphate as cofactor.

Its subcellular location is the cytoplasm. It carries out the reaction (6R)-5,10-methylene-5,6,7,8-tetrahydrofolate + glycine + H2O = (6S)-5,6,7,8-tetrahydrofolate + L-serine. It functions in the pathway one-carbon metabolism; tetrahydrofolate interconversion. It participates in amino-acid biosynthesis; glycine biosynthesis; glycine from L-serine: step 1/1. Catalyzes the reversible interconversion of serine and glycine with tetrahydrofolate (THF) serving as the one-carbon carrier. This reaction serves as the major source of one-carbon groups required for the biosynthesis of purines, thymidylate, methionine, and other important biomolecules. Also exhibits THF-independent aldolase activity toward beta-hydroxyamino acids, producing glycine and aldehydes, via a retro-aldol mechanism. The polypeptide is Serine hydroxymethyltransferase (Prochlorococcus marinus (strain MIT 9303)).